Consider the following 465-residue polypeptide: tRNA modification GTPase MnmE (465 aa).

Residues Arg-21, Glu-85, and Lys-124 each contribute to the (6S)-5-formyl-5,6,7,8-tetrahydrofolate site. Residues 220-387 (GVPVAIIGET…LQQRLVAAAH (168 aa)) enclose the TrmE-type G domain. Asn-230 contacts K(+). GTP contacts are provided by residues 230–235 (NAGKST), 249–255 (SDIHGTT), and 274–277 (DTAG). Ser-234 contacts Mg(2+). Ser-249, Ile-251, and Thr-254 together coordinate K(+). Thr-255 serves as a coordination point for Mg(2+). Residue Lys-465 coordinates (6S)-5-formyl-5,6,7,8-tetrahydrofolate.

Belongs to the TRAFAC class TrmE-Era-EngA-EngB-Septin-like GTPase superfamily. TrmE GTPase family. In terms of assembly, homodimer. Heterotetramer of two MnmE and two MnmG subunits. K(+) serves as cofactor.

It localises to the cytoplasm. Its function is as follows. Exhibits a very high intrinsic GTPase hydrolysis rate. Involved in the addition of a carboxymethylaminomethyl (cmnm) group at the wobble position (U34) of certain tRNAs, forming tRNA-cmnm(5)s(2)U34. This Bacteroides fragilis (strain YCH46) protein is tRNA modification GTPase MnmE.